The chain runs to 385 residues: Photoreceptor ankyrin repeat protein (385 aa).

ANK repeat units lie at residues C17–E46, N53–Q83, D87–L116, R122–S151, and R156–L190. Residues L270 to K385 form a disordered region. Residues A284–V297 show a composition bias toward pro residues. Over residues A304–Q326 the composition is skewed to polar residues. The segment covering F361–P373 has biased composition (basic and acidic residues). Residues R374–K385 are compositionally biased toward gly residues.

In terms of tissue distribution, isoform 1: Expressed predominantly in the retina. Isoform 2: Expressed in the pineal gland.

The protein localises to the cytoplasm. Its subcellular location is the cytosol. The protein resides in the nucleus. In terms of biological role, acts as a transcriptional repressor for CRX-activated photoreceptor gene regulation. This Mus musculus (Mouse) protein is Photoreceptor ankyrin repeat protein.